The sequence spans 268 residues: F-actin-capping protein subunit alpha (268 aa).

Position 2 is an N-acetylserine (Ser-2). Ser-17 bears the Phosphoserine mark.

Belongs to the F-actin-capping protein alpha subunit family. As to quaternary structure, component of the F-actin capping complex, composed of a heterodimer of an alpha and a beta subunit. Interacts with BSP1 (via C-terminus); leading to recruitment of the F-actin capping complex to actin cortical patches and the acomyosin contractile ring.

The protein localises to the cytoplasm. It is found in the cytoskeleton. The protein resides in the actin patch. Functionally, F-actin-capping proteins bind in a Ca(2+)-independent manner to the fast growing ends of actin filaments (barbed end) thereby blocking the exchange of subunits at these ends. Unlike other capping proteins (such as gelsolin and severin), these proteins do not sever actin filaments. This Saccharomyces cerevisiae (strain ATCC 204508 / S288c) (Baker's yeast) protein is F-actin-capping protein subunit alpha (CAP1).